Here is a 262-residue protein sequence, read N- to C-terminus: Translation initiation factor 2 subunit alpha (262 aa).

Residues 15–86 (GELVVGTVHK…RKGHVDVSMK (72 aa)) form the S1 motif domain.

The protein belongs to the eIF-2-alpha family. In terms of assembly, heterotrimer composed of an alpha, a beta and a gamma chain.

Its function is as follows. eIF-2 functions in the early steps of protein synthesis by forming a ternary complex with GTP and initiator tRNA. The polypeptide is Translation initiation factor 2 subunit alpha (eif2a) (Methanothermobacter thermautotrophicus (strain ATCC 29096 / DSM 1053 / JCM 10044 / NBRC 100330 / Delta H) (Methanobacterium thermoautotrophicum)).